The sequence spans 400 residues: Probable glucan endo-1,6-beta-glucosidase B (400 aa).

An N-terminal signal peptide occupies residues 1–17; the sequence is MIRRLAALSALSGLATA. A glycan (N-linked (GlcNAc...) asparagine) is linked at N30. The active-site Proton donor is the E219. An N-linked (GlcNAc...) asparagine glycan is attached at N272. The active-site Nucleophile is the E320.

The protein belongs to the glycosyl hydrolase 5 (cellulase A) family.

Its subcellular location is the secreted. It carries out the reaction Random hydrolysis of (1-&gt;6)-linkages in (1-&gt;6)-beta-D-glucans.. In terms of biological role, beta-glucanases participate in the metabolism of beta-glucan, the main structural component of the cell wall. Acts on lutean, pustulan and 1,6-oligo-beta-D-glucosides. The protein is Probable glucan endo-1,6-beta-glucosidase B (exgB) of Neosartorya fischeri (strain ATCC 1020 / DSM 3700 / CBS 544.65 / FGSC A1164 / JCM 1740 / NRRL 181 / WB 181) (Aspergillus fischerianus).